The following is a 125-amino-acid chain: Holo-[acyl-carrier-protein] synthase (125 aa).

Mg(2+) contacts are provided by D8 and E56.

The protein belongs to the P-Pant transferase superfamily. AcpS family. It depends on Mg(2+) as a cofactor.

The protein localises to the cytoplasm. The enzyme catalyses apo-[ACP] + CoA = holo-[ACP] + adenosine 3',5'-bisphosphate + H(+). Transfers the 4'-phosphopantetheine moiety from coenzyme A to a Ser of acyl-carrier-protein. The chain is Holo-[acyl-carrier-protein] synthase from Borrelia hermsii (strain HS1 / DAH).